A 280-amino-acid polypeptide reads, in one-letter code: Apoptosis regulator ced-9 (280 aa).

The disordered stretch occupies residues 33–59 (GTEPTDFGINSDAQDLPSPSRQASTRR). The segment covering 43 to 59 (SDAQDLPSPSRQASTRR) has biased composition (polar residues). The BH4 motif lies at 80-99 (IEGFVVDYFTHRIRQNGMEW). A BH1 motif is present at residues 160–179 (QTDQCPMSYGRLIGLISFGG). Positions 213–229 (NWKEHNRSWDDFMTLGK) match the BH2 motif.

The protein belongs to the Bcl-2 family. As to quaternary structure, interacts with asymmetric homodimer ced-4; the interaction sequesters ced-4. Interacts with egl-1; the interaction results in ced-4 release. Interacts with dre-1; the interaction inhibits ced-9 activity, either directly or indirectly. Interacts with dct-1. May form a complex composed of ced-9, ced-4 and mac-1. Interacts with dynamin-related protein drp-1 (via residues 280-502); the interaction is enhanced by GTP rather than GDP; the interaction is probably direct and may occur at the mitochondrion. Interaction with drp-1 may be enhanced by interaction of ced-9 with egl-1, but not with ced-4. A ced-9/egl-1 complex may recruit drp-1 to the mitochondrial surface. Interacts with fzo-1; interaction may be suppressed by interaction of ced-9 with egl-1.

The protein resides in the perikaryon. Its subcellular location is the synapse. It is found in the endomembrane system. It localises to the mitochondrion membrane. The protein localises to the cytoplasm. In terms of biological role, plays a major role in programmed cell death (PCD, apoptosis). egl-1 binds to and directly inhibits the activity of ced-9, releasing the cell death activator ced-4 from a ced-9/ced-4 containing protein complex and allowing ced-4 to activate the cell-killing caspase ced-3. During larval development, required for the elimination of transient presynaptic components downstream of egl-1 and upstream of ced-4 and ced-3 apoptotic pathway. Has been shown in one study to be dispensable in mitochondrial dynamics and morphology during early embryonic development. However, another study shows that a egl-1/ced-9 containing complex may promote drp-1-dependent mitochondrial fission. In Caenorhabditis elegans, this protein is Apoptosis regulator ced-9 (ced-9).